A 394-amino-acid polypeptide reads, in one-letter code: ATP-dependent RNA helicase fal1 (394 aa).

A Q motif motif is present at residues 21–49; sequence SSFEEMNLKEDLLRGIYAYGYETPSAVQS. A Helicase ATP-binding domain is found at 52-222; sequence IIQICKGRDV…NKFTTNPVRI (171 aa). 65–72 is a binding site for ATP; sequence AQSGTGKT. Position 67 is a phosphoserine (S67). The DEAD box motif lies at 170-173; that stretch reads DEAD. A Helicase C-terminal domain is found at 233–394; it reads GLKQYFIAVE…EMPMNIGDMV (162 aa).

It belongs to the DEAD box helicase family. DDX48/FAL1 subfamily.

The protein localises to the nucleus. The protein resides in the nucleolus. The enzyme catalyses ATP + H2O = ADP + phosphate + H(+). Functionally, ATP-dependent RNA helicase involved in 40S ribosomal subunit biogenesis. Required for the processing and cleavage of 35S pre-rRNA at sites A0, A1, and A2, leading to mature 18S rRNA. The sequence is that of ATP-dependent RNA helicase fal1 (tif412) from Schizosaccharomyces pombe (strain 972 / ATCC 24843) (Fission yeast).